We begin with the raw amino-acid sequence, 318 residues long: Pantothenate kinase (318 aa).

Residue 96–103 (GSVAVGKS) coordinates ATP.

Belongs to the prokaryotic pantothenate kinase family.

Its subcellular location is the cytoplasm. It catalyses the reaction (R)-pantothenate + ATP = (R)-4'-phosphopantothenate + ADP + H(+). The protein operates within cofactor biosynthesis; coenzyme A biosynthesis; CoA from (R)-pantothenate: step 1/5. The polypeptide is Pantothenate kinase (Rhodopseudomonas palustris (strain BisB5)).